Reading from the N-terminus, the 285-residue chain is Bifunctional protein FolD (285 aa).

Residues 165-167 (GRS) and S190 contribute to the NADP(+) site.

Belongs to the tetrahydrofolate dehydrogenase/cyclohydrolase family. Homodimer.

The catalysed reaction is (6R)-5,10-methylene-5,6,7,8-tetrahydrofolate + NADP(+) = (6R)-5,10-methenyltetrahydrofolate + NADPH. It catalyses the reaction (6R)-5,10-methenyltetrahydrofolate + H2O = (6R)-10-formyltetrahydrofolate + H(+). Its pathway is one-carbon metabolism; tetrahydrofolate interconversion. Functionally, catalyzes the oxidation of 5,10-methylenetetrahydrofolate to 5,10-methenyltetrahydrofolate and then the hydrolysis of 5,10-methenyltetrahydrofolate to 10-formyltetrahydrofolate. The polypeptide is Bifunctional protein FolD (Burkholderia ambifaria (strain ATCC BAA-244 / DSM 16087 / CCUG 44356 / LMG 19182 / AMMD) (Burkholderia cepacia (strain AMMD))).